The following is a 210-amino-acid chain: Protein VNG_2543C (210 aa).

The region spanning 12–206 (EDGARTVELA…ETGDEDDPVE (195 aa)) is the AMMECR1 domain.

This Halobacterium salinarum (strain ATCC 700922 / JCM 11081 / NRC-1) (Halobacterium halobium) protein is Protein VNG_2543C.